The following is a 178-amino-acid chain: Ribosome maturation factor RimM (178 aa).

A PRC barrel domain is found at 99–178 (QGEFYWRDLI…EITVDWDPGF (80 aa)).

It belongs to the RimM family. As to quaternary structure, binds ribosomal protein uS19.

Its subcellular location is the cytoplasm. In terms of biological role, an accessory protein needed during the final step in the assembly of 30S ribosomal subunit, possibly for assembly of the head region. Essential for efficient processing of 16S rRNA. May be needed both before and after RbfA during the maturation of 16S rRNA. It has affinity for free ribosomal 30S subunits but not for 70S ribosomes. This Pseudoalteromonas translucida (strain TAC 125) protein is Ribosome maturation factor RimM.